The sequence spans 288 residues: ATP synthase gamma chain (288 aa).

The protein belongs to the ATPase gamma chain family. In terms of assembly, F-type ATPases have 2 components, CF(1) - the catalytic core - and CF(0) - the membrane proton channel. CF(1) has five subunits: alpha(3), beta(3), gamma(1), delta(1), epsilon(1). CF(0) has three main subunits: a, b and c.

It localises to the cell membrane. Produces ATP from ADP in the presence of a proton gradient across the membrane. The gamma chain is believed to be important in regulating ATPase activity and the flow of protons through the CF(0) complex. The polypeptide is ATP synthase gamma chain (Macrococcus caseolyticus (strain JCSC5402) (Macrococcoides caseolyticum)).